Reading from the N-terminus, the 347-residue chain is UDP-3-O-acylglucosamine N-acyltransferase (347 aa).

H241 acts as the Proton acceptor in catalysis.

This sequence belongs to the transferase hexapeptide repeat family. LpxD subfamily. In terms of assembly, homotrimer.

It catalyses the reaction a UDP-3-O-[(3R)-3-hydroxyacyl]-alpha-D-glucosamine + a (3R)-hydroxyacyl-[ACP] = a UDP-2-N,3-O-bis[(3R)-3-hydroxyacyl]-alpha-D-glucosamine + holo-[ACP] + H(+). It participates in bacterial outer membrane biogenesis; LPS lipid A biosynthesis. In terms of biological role, catalyzes the N-acylation of UDP-3-O-acylglucosamine using 3-hydroxyacyl-ACP as the acyl donor. Is involved in the biosynthesis of lipid A, a phosphorylated glycolipid that anchors the lipopolysaccharide to the outer membrane of the cell. This chain is UDP-3-O-acylglucosamine N-acyltransferase, found in Nitrosococcus oceani (strain ATCC 19707 / BCRC 17464 / JCM 30415 / NCIMB 11848 / C-107).